Consider the following 94-residue polypeptide: Large ribosomal subunit protein uL23 (94 aa).

The protein belongs to the universal ribosomal protein uL23 family. In terms of assembly, part of the 50S ribosomal subunit. Contacts protein L29, and trigger factor when it is bound to the ribosome.

One of the early assembly proteins it binds 23S rRNA. One of the proteins that surrounds the polypeptide exit tunnel on the outside of the ribosome. Forms the main docking site for trigger factor binding to the ribosome. The protein is Large ribosomal subunit protein uL23 of Akkermansia muciniphila (strain ATCC BAA-835 / DSM 22959 / JCM 33894 / BCRC 81048 / CCUG 64013 / CIP 107961 / Muc).